We begin with the raw amino-acid sequence, 513 residues long: Putative ribose/galactose/methyl galactoside import ATP-binding protein 3 (513 aa).

ABC transporter domains lie at 15-252 and 263-508; these read IELT…VGRQ and TSAN…TQRE. Residue 47–54 participates in ATP binding; sequence GENGAGKS.

It belongs to the ABC transporter superfamily. Carbohydrate importer 2 (CUT2) (TC 3.A.1.2) family.

Its subcellular location is the cell inner membrane. The catalysed reaction is D-ribose(out) + ATP + H2O = D-ribose(in) + ADP + phosphate + H(+). It catalyses the reaction D-galactose(out) + ATP + H2O = D-galactose(in) + ADP + phosphate + H(+). In terms of biological role, part of an ABC transporter complex involved in carbohydrate import. Could be involved in ribose, galactose and/or methyl galactoside import. Responsible for energy coupling to the transport system. This is Putative ribose/galactose/methyl galactoside import ATP-binding protein 3 from Burkholderia ambifaria (strain ATCC BAA-244 / DSM 16087 / CCUG 44356 / LMG 19182 / AMMD) (Burkholderia cepacia (strain AMMD)).